The chain runs to 486 residues: UDP-N-acetylmuramate--L-alanine ligase (486 aa).

ATP is bound at residue Gly123–Thr129.

The protein belongs to the MurCDEF family.

It localises to the cytoplasm. The catalysed reaction is UDP-N-acetyl-alpha-D-muramate + L-alanine + ATP = UDP-N-acetyl-alpha-D-muramoyl-L-alanine + ADP + phosphate + H(+). The protein operates within cell wall biogenesis; peptidoglycan biosynthesis. Functionally, cell wall formation. This Pseudomonas fluorescens (strain Pf0-1) protein is UDP-N-acetylmuramate--L-alanine ligase.